Consider the following 75-residue polypeptide: uncharacterized protein (75 aa).

This is an uncharacterized protein from Escherichia coli O6:H1 (strain CFT073 / ATCC 700928 / UPEC).